We begin with the raw amino-acid sequence, 20 residues long: Hongotoxin-5 (20 aa).

It belongs to the short scorpion toxin superfamily. Potassium channel inhibitor family. Alpha-KTx 02 subfamily. As to expression, expressed by the venom gland.

Its subcellular location is the secreted. Potent selective inhibitor of Kv1/KCNA voltage-gated potassium channels. This chain is Hongotoxin-5, found in Centruroides limbatus (Bark scorpion).